Reading from the N-terminus, the 619-residue chain is Alpha-L-arabinofuranosidase C (619 aa).

The first 37 residues, 1–37 (MINHNKTPNILAKVFKRTCGLVSTGAALAILSQAASA), serve as a signal peptide directing secretion. In terms of domain architecture, CBM2 spans 38–136 (ACTYTIDSEW…TVTGAACNSA (99 aa)). The cysteines at positions 39 and 133 are disulfide-linked. The region spanning 163–289 (LLQEAQAGFC…LPNIDSLSVV (127 aa)) is the CBM6 domain. A disordered region spans residues 300-319 (SVSSSSSVQSSSSSSSTPSQ).

Belongs to the glycosyl hydrolase 62 family.

The protein resides in the secreted. The catalysed reaction is Hydrolysis of terminal non-reducing alpha-L-arabinofuranoside residues in alpha-L-arabinosides.. It participates in glycan metabolism; hemicellulose degradation. Functionally, xylanase C contributes to hydrolyze hemicellulose, the major component of plant cell-walls. The chain is Alpha-L-arabinofuranosidase C (xynC) from Cellvibrio japonicus (strain Ueda107) (Pseudomonas fluorescens subsp. cellulosa).